The chain runs to 501 residues: Ribose import ATP-binding protein RbsA (501 aa).

2 ABC transporter domains span residues 8–245 (LKMV…VGRT) and 255–500 (VKKG…VGIN). 40–47 (GENGAGKS) contributes to the ATP binding site.

Belongs to the ABC transporter superfamily. Ribose importer (TC 3.A.1.2.1) family. The complex is composed of an ATP-binding protein (RbsA), two transmembrane proteins (RbsC) and a solute-binding protein (RbsB).

It is found in the cell membrane. It carries out the reaction D-ribose(out) + ATP + H2O = D-ribose(in) + ADP + phosphate + H(+). Its function is as follows. Part of the ABC transporter complex RbsABC involved in ribose import. Responsible for energy coupling to the transport system. This chain is Ribose import ATP-binding protein RbsA, found in Clostridium perfringens (strain 13 / Type A).